Consider the following 329-residue polypeptide: Phytochromobilin:ferredoxin oxidoreductase, chloroplastic (329 aa).

The N-terminal 45 residues, 1–45 (MALSMEFGFSIGSCFKAPNPPVLISASPNKINFTLRRRKKRFLLR), are a transit peptide targeting the chloroplast.

Belongs to the HY2 family.

The protein resides in the plastid. It is found in the chloroplast. It carries out the reaction (3Z)-phytochromobilin + 2 oxidized [2Fe-2S]-[ferredoxin] = biliverdin IXalpha + 2 reduced [2Fe-2S]-[ferredoxin] + 2 H(+). Its function is as follows. Catalyzes the two-electron reduction of biliverdin IX-alpha to the tetrapyrrole chromophore phytochromobilin (PPhiB). This Arabidopsis thaliana (Mouse-ear cress) protein is Phytochromobilin:ferredoxin oxidoreductase, chloroplastic.